Consider the following 218-residue polypeptide: Pyridoxine/pyridoxamine 5'-phosphate oxidase (218 aa).

Substrate contacts are provided by residues 12–15 (RLSY) and Arg70. FMN is bound by residues 65 to 70 (RTVLLR), 80 to 81 (YT), Lys87, and Gln109. Substrate is bound by residues Tyr127, Arg131, and Ser135. FMN-binding positions include 145-146 (QS) and Trp191. 197–199 (RLH) lines the substrate pocket. Residue Arg201 participates in FMN binding.

The protein belongs to the pyridoxamine 5'-phosphate oxidase family. Homodimer. It depends on FMN as a cofactor.

The catalysed reaction is pyridoxamine 5'-phosphate + O2 + H2O = pyridoxal 5'-phosphate + H2O2 + NH4(+). It carries out the reaction pyridoxine 5'-phosphate + O2 = pyridoxal 5'-phosphate + H2O2. It participates in cofactor metabolism; pyridoxal 5'-phosphate salvage; pyridoxal 5'-phosphate from pyridoxamine 5'-phosphate: step 1/1. Its pathway is cofactor metabolism; pyridoxal 5'-phosphate salvage; pyridoxal 5'-phosphate from pyridoxine 5'-phosphate: step 1/1. Functionally, catalyzes the oxidation of either pyridoxine 5'-phosphate (PNP) or pyridoxamine 5'-phosphate (PMP) into pyridoxal 5'-phosphate (PLP). This is Pyridoxine/pyridoxamine 5'-phosphate oxidase from Acinetobacter baumannii (strain AB0057).